Here is a 193-residue protein sequence, read N- to C-terminus: UPF0215 protein PH0071 (193 aa).

Belongs to the UPF0215 family.

The polypeptide is UPF0215 protein PH0071 (Pyrococcus horikoshii (strain ATCC 700860 / DSM 12428 / JCM 9974 / NBRC 100139 / OT-3)).